The chain runs to 1755 residues: E3 ubiquitin-protein ligase UBR2 (1755 aa).

Ala2 carries the post-translational modification N-acetylalanine. A Glycyl lysine isopeptide (Lys-Gly) (interchain with G-Cter in ubiquitin) cross-link involves residue Lys94. The UBR-type zinc finger occupies 97 to 168 (HLCGRVFKVG…EGPYCQKHEL (72 aa)). Positions 99, 112, 115, 124, 127, 133, and 136 each coordinate Zn(2+). Phe148 provides a ligand contact to a peptide. Residue Cys149 coordinates Zn(2+). Residue Asp150 participates in a peptide binding. Cys151 is a binding site for Zn(2+). Residue Asp153 participates in a peptide binding. Lys158 participates in a covalent cross-link: Glycyl lysine isopeptide (Lys-Gly) (interchain with G-Cter in ubiquitin). Cys163 contacts Zn(2+). Lys165 is covalently cross-linked (Glycyl lysine isopeptide (Lys-Gly) (interchain with G-Cter in ubiquitin)). His166 serves as a coordination point for Zn(2+). Residues Lys248, Lys255, and Lys470 each participate in a glycyl lysine isopeptide (Lys-Gly) (interchain with G-Cter in ubiquitin) cross-link. Position 476 is a phosphoserine (Ser476). Glycyl lysine isopeptide (Lys-Gly) (interchain with G-Cter in ubiquitin) cross-links involve residues Lys488, Lys568, Lys779, and Lys789. The segment at 1004–1034 (ESSPTSPVAETEGTIMEESSRDKDKAERKRK) is disordered. Residues 1019–1054 (MEESSRDKDKAERKRKAEIARLRREKIMAQMSEMQR) are a coiled coil. A compositionally biased stretch (basic and acidic residues) spans 1021-1034 (ESSRDKDKAERKRK). Zn(2+) is bound by residues Cys1108, Cys1111, Cys1168, His1170, His1173, Cys1176, Cys1210, and Cys1213. Residues 1108 to 1214 (CILCQEEQEV…NGEFLCPLCE (107 aa)) form an RING-type; atypical zinc finger. A disordered region spans residues 1261 to 1287 (RKEESTPNNASTKNSENVDELQLPEGF). Over residues 1266-1275 (TPNNASTKNS) the composition is skewed to polar residues. Residues Lys1496, Lys1599, and Lys1689 each participate in a glycyl lysine isopeptide (Lys-Gly) (interchain with G-Cter in ubiquitin) cross-link. Ser1694 carries the phosphoserine modification. At Tyr1697 the chain carries Phosphotyrosine.

Belongs to the E3 ubiquitin-protein ligase UBR1-like family. As to quaternary structure, interacts with UBE2B; promotes the UBE2B-H2A interaction and the ubiquitination of histone H2A by UBE2B and UBR2. Interacts with RECQL4. Interacts with TEX19; does not lead to TEX19 degradation and stabilizes it. Interacts with CASP8. Interacts with ATXN3. Interacts with UBE2O. Post-translationally, dephosphorylated by DUSP22 at Ser-1694 and Tyr-1697, leading to subsequent ubiquitination and proteasomal degradation. 'Lys-48'-linked ubiquitinated at Lys-94, Lys-779 and Lys-1599 following DUSP22-mediated dephosphorylation of Ser-1694 and Tyr-1697 which promotes UBR2 interaction with the SCF(FBW1A) E3 ubiquitin-protein ligase complex. In terms of tissue distribution, broadly expressed, with highest levels in skeletal muscle, kidney and pancreas. Present in acinar cells of the pancreas (at protein level).

It is found in the nucleus. Its subcellular location is the chromosome. It carries out the reaction S-ubiquitinyl-[E2 ubiquitin-conjugating enzyme]-L-cysteine + [acceptor protein]-L-lysine = [E2 ubiquitin-conjugating enzyme]-L-cysteine + N(6)-ubiquitinyl-[acceptor protein]-L-lysine.. Its pathway is protein modification; protein ubiquitination. Functionally, E3 ubiquitin-protein ligase which is a component of the N-end rule pathway. Recognizes and binds to proteins bearing specific N-terminal residues (N-degrons) that are destabilizing according to the N-end rule, leading to their ubiquitination and subsequent degradation. Recognizes both type-1 and type-2 N-degrons, containing positively charged amino acids (Arg, Lys and His) and bulky and hydrophobic amino acids, respectively. Does not ubiquitinate proteins that are acetylated at the N-terminus. In contrast, it strongly binds methylated N-degrons. Plays a critical role in chromatin inactivation and chromosome-wide transcriptional silencing during meiosis via ubiquitination of histone H2A. Binds leucine and is a negative regulator of the leucine-mTOR signaling pathway, thereby controlling cell growth. Required for spermatogenesis, promotes, with Tex19.1, SPO11-dependent recombination foci to accumulate and drive robust homologous chromosome synapsis. Polyubiquitinates LINE-1 retrotransposon encoded, LIRE1, which induces degradation, inhibiting LINE-1 retrotransposon mobilization. Catalyzes ubiquitination and degradation of the N-terminal part of NLRP1 following NLRP1 activation by pathogens and other damage-associated signals: ubiquitination promotes degradation of the N-terminal part and subsequent release of the cleaved C-terminal part of NLRP1, which polymerizes and forms the NLRP1 inflammasome followed by host cell pyroptosis. Plays a role in T-cell receptor signaling by inducing 'Lys-63'-linked ubiquitination of lymphocyte cell-specific kinase LCK. This activity is regulated by DUSP22, which induces 'Lys-48'-linked ubiquitination of UBR2, leading to its proteasomal degradation by SCF E3 ubiquitin-protein ligase complex. The protein is E3 ubiquitin-protein ligase UBR2 (UBR2) of Homo sapiens (Human).